Consider the following 700-residue polypeptide: MLSKYQPSAHIAVTRAHWEDLHQAISSGKVTIDGNSLTLADVVAVSKFGCYARLSENRETIDAINESVSTLQECLDEGHHIYGVNTGFGGSADSRTDHLASLQRALLQLLQSGILTKADIGSGDTPSQSHAMPPEWVKAIMVVRSNSVARGHSAVSIGSIEAILRLLQRDITPVVPLRGTISASGDLMPLAYIVGAIEGNPGVFARAGKSPHGQALPAQQVLEQLGIPRITLGPKEALGLVNGTAASAALSSLVLYEAHRLALLSQVTTALTVEALRGSAESFHPFISQARPHDGQMEAASNILTVMRGSRLAMGTSEVQTGLVQDRYSLRTASQWIGPQLEDLLLADRQITVELNSTTDNPLIDSVSRHFYCGGNFQATSVTSAMEKTRLALQMLGKLMFAQCSEMIDPSLNNGLPTNLVADDPSLSFTMKGVDISMAAYMSELAYLANPVSSHVQTAEMHNQAVNSLAFVSARYTMQAVDIVSMMSACSLYVACQALDLRVLQLNFFRELHPIVCNGTHDAFHTILAPKELERITQQLVTAIQDAWLTTSRMDAGDRCQRVIKLSLPILLNEMRGAIPSDRQQVDLLTSIGNWEEATCYKMLEAYKQTHERFCRTQNTVEYLGAGSKAIYHAIRHKVGVPFHQGFVEQPSADDLDTTAIINGREKKTTGGWISLIYEALRDDSLTGVILEAVQPVRSI.

Tyr-82 serves as the catalytic Proton donor/acceptor. Positions 183–185 (ASG) form a cross-link, 5-imidazolinone (Ala-Gly). Ser-184 carries the post-translational modification 2,3-didehydroalanine (Ser). (E)-cinnamate-binding residues include Asn-242, Gln-325, Arg-331, Asn-361, Lys-432, Glu-460, and Asn-463.

The protein belongs to the PAL/histidase family. In terms of processing, contains an active site 4-methylidene-imidazol-5-one (MIO), which is formed autocatalytically by cyclization and dehydration of residues Ala-Ser-Gly.

It carries out the reaction L-phenylalanine = (E)-cinnamate + NH4(+). Its pathway is secondary metabolite biosynthesis. Functionally, phenylalanine ammonia-lyase; part of the gene cluster that mediates the biosynthesis of hancockiamides, an unusual new family of N-cinnamoylated piperazines. The NRPS hkm10 and the NmrA-like reductase hkm9 are proposed to convert two molecules of L-Phe to the intermediary piperazine called xenocockiamide A. Xenocockiamide A is then converted to hancockiamide D via a series of hydroxylations and O-methylations. The tyrosinase hkm6 may catalyze an aromatic hydroxylation, then the 2-oxoglutarate-dependent Fe(II) dioxygenase hkm4 and the FAD-dependent phenol hydroxylase hkm7 may catalyze consecutive hydroxylations to install 2 more hydroxy groups, and the methyltransferase hkm8 probably catalyzes two methylations using 2 molecules of S-adenosyl-L-methionine (SAM). The NRPS hkm11 activates and transfers trans-cinnamate supplied by the PAL hkm12 to hancockiamide D and produces hancockiamide A. NRPS Hkm11 has the flexibility to tolerate the bulky hancockiamide G as a substrate and the absence of the acetyl-transferase hkm3 opens up the opportunity for hkm11 to introduce a second N-cinnamoyl moiety. The cytochrome P450 monooxygenase hkm5 catalyzes the methylenedioxy bridge formation, converting hancockiamide A into hancockiamide G. Hkm5 can also convert hancockiamide B into hancockiamide C, and hancockiamide D into hancockiamide H. The N-acetyltransferase hkm3 finally transfers an acetyl group to 1-N of piperazine, converting hancockiamide A into hancockiamide B and hancockiamide G into hancockiamide C. The protein is Phenylalanine ammonia-lyase hkm12 of Aspergillus hancockii.